An 89-amino-acid chain; its full sequence is Small ribosomal subunit protein uS15 (89 aa).

This sequence belongs to the universal ribosomal protein uS15 family. In terms of assembly, part of the 30S ribosomal subunit. Forms a bridge to the 50S subunit in the 70S ribosome, contacting the 23S rRNA.

One of the primary rRNA binding proteins, it binds directly to 16S rRNA where it helps nucleate assembly of the platform of the 30S subunit by binding and bridging several RNA helices of the 16S rRNA. Functionally, forms an intersubunit bridge (bridge B4) with the 23S rRNA of the 50S subunit in the ribosome. The polypeptide is Small ribosomal subunit protein uS15 (Azotobacter vinelandii (strain DJ / ATCC BAA-1303)).